The following is a 320-amino-acid chain: Nicotianamine synthase 2 (320 aa).

This sequence belongs to the nicotianamine synthase (NAS)-like family.

It catalyses the reaction 3 S-adenosyl-L-methionine = nicotianamine + 3 S-methyl-5'-thioadenosine + 3 H(+). Its function is as follows. Synthesizes nicotianamine, a polyamine which serves as a sensor for the physiological iron status within the plant, and/or might be involved in the transport of iron. In Arabidopsis thaliana (Mouse-ear cress), this protein is Nicotianamine synthase 2 (NAS2).